The chain runs to 493 residues: MNKTRPGPARCVMVLGTTSGAGKSWLATALCRYYSNQGLKVAPFKAQNMSNNARVVAAPGEQFGEIGSAQYFQALAARAVPDVRMNPLLLKPEADTKSQVVLLGQVSDELSQLPWRGRSQRVWPQIAAALDALRAENDVVVIEGAGSPAEINLHASDVVNMRVARHAEARCLLVTDIDRGGAFAHLFGTWALLPEEERALIAGFVLNKFRGDEALLAPAPQMLQDKTGVPVVATIPMQWNHGLPEEDGVFDMRSTAVGAVHTRIAVVAYPRISNLDEFQPLKNVPGVRLSWARSPADVEGADWIVLPGSKATAADLAWLRAQGLDAAIAAHAARGGRVLGVCGGLQMLGEALIDTVGVDGNGPGLGLLPLVTSFEATKTVRPTRQCFGAVQGAWRHLAGVAVQGYEIHHGQTAQHPAMAASGDVARELMPGLAWQNPAGNVLGLYLHGLFEDAAVLRALFGADAPTLDAVFEGLAAGIARHFEPRALDALAAQ.

The region spanning 261–455 (HTRIAVVAYP…LHGLFEDAAV (195 aa)) is the GATase cobBQ-type domain. The active-site Nucleophile is Cys-342. His-447 is a catalytic residue.

This sequence belongs to the CobB/CobQ family. CobQ subfamily.

It functions in the pathway cofactor biosynthesis; adenosylcobalamin biosynthesis. Catalyzes amidations at positions B, D, E, and G on adenosylcobyrinic A,C-diamide. NH(2) groups are provided by glutamine, and one molecule of ATP is hydrogenolyzed for each amidation. The chain is Cobyric acid synthase from Acidovorax sp. (strain JS42).